A 128-amino-acid polypeptide reads, in one-letter code: Glycine cleavage system H protein (128 aa).

One can recognise a Lipoyl-binding domain in the interval 24 to 106 (LVRIGISEFA…HGEGWLLIIR (83 aa)). An N6-lipoyllysine modification is found at Lys-65.

It belongs to the GcvH family. In terms of assembly, the glycine cleavage system is composed of four proteins: P, T, L and H. Requires (R)-lipoate as cofactor.

In terms of biological role, the glycine cleavage system catalyzes the degradation of glycine. The H protein shuttles the methylamine group of glycine from the P protein to the T protein. The polypeptide is Glycine cleavage system H protein (Prochlorococcus marinus (strain NATL2A)).